Here is a 239-residue protein sequence, read N- to C-terminus: Cytochrome c oxidase subunit 2 (239 aa).

At Met-1–His-26 the chain is on the mitochondrial intermembrane side. A helical membrane pass occupies residues Val-27–Ser-48. Residues Lys-49–Glu-62 lie on the Mitochondrial matrix side of the membrane. Residues Thr-63–Lys-82 form a helical membrane-spanning segment. The Mitochondrial intermembrane portion of the chain corresponds to Leu-83–Arg-239. Residues His-161, Cys-196, Glu-198, Cys-200, His-204, and Met-207 each contribute to the Cu cation site. Glu-198 serves as a coordination point for Mg(2+).

This sequence belongs to the cytochrome c oxidase subunit 2 family. Component of the cytochrome c oxidase (complex IV, CIV), a multisubunit enzyme composed of a catalytic core of 3 subunits and several supernumerary subunits. The complex exists as a monomer or a dimer and forms supercomplexes (SCs) in the inner mitochondrial membrane with ubiquinol-cytochrome c oxidoreductase (cytochrome b-c1 complex, complex III, CIII). Cu cation serves as cofactor.

Its subcellular location is the mitochondrion inner membrane. It carries out the reaction 4 Fe(II)-[cytochrome c] + O2 + 8 H(+)(in) = 4 Fe(III)-[cytochrome c] + 2 H2O + 4 H(+)(out). Functionally, component of the cytochrome c oxidase, the last enzyme in the mitochondrial electron transport chain which drives oxidative phosphorylation. The respiratory chain contains 3 multisubunit complexes succinate dehydrogenase (complex II, CII), ubiquinol-cytochrome c oxidoreductase (cytochrome b-c1 complex, complex III, CIII) and cytochrome c oxidase (complex IV, CIV), that cooperate to transfer electrons derived from NADH and succinate to molecular oxygen, creating an electrochemical gradient over the inner membrane that drives transmembrane transport and the ATP synthase. Cytochrome c oxidase is the component of the respiratory chain that catalyzes the reduction of oxygen to water. Electrons originating from reduced cytochrome c in the intermembrane space (IMS) are transferred via the dinuclear copper A center (CU(A)) of subunit 2 and heme A of subunit 1 to the active site in subunit 1, a binuclear center (BNC) formed by heme A3 and copper B (CU(B)). The BNC reduces molecular oxygen to 2 water molecules using 4 electrons from cytochrome c in the IMS and 4 protons from the mitochondrial matrix. This chain is Cytochrome c oxidase subunit 2 (COII), found in Branchiostoma lanceolatum (Common lancelet).